A 345-amino-acid polypeptide reads, in one-letter code: NADH-ubiquinone oxidoreductase chain 2 (345 aa).

10 helical membrane-spanning segments follow: residues 1 to 21, 25 to 45, 59 to 79, 96 to 116, 123 to 143, 148 to 168, 191 to 211, 240 to 260, 274 to 294, and 324 to 344; these read MNPIINLILLSSMIAGTILTM, HWVSAWLGLELNTLAIIPIIS, YFLIQAASSALFLLSGITNAY, IMLSVALATKLGLAPIHFWLP, PMITALIITTWQKIAPMALLI, LIPPTITLIMGLLSTIIGGLG, ITITTITPSLALFNLTLYILL, TASLFLLSLLSLGGLPPLSGF, HLTPLALLMAITALLSLMFYL, and SLLSSLILLSLFLLPITPLMI.

This sequence belongs to the complex I subunit 2 family.

It is found in the mitochondrion inner membrane. It carries out the reaction a ubiquinone + NADH + 5 H(+)(in) = a ubiquinol + NAD(+) + 4 H(+)(out). Core subunit of the mitochondrial membrane respiratory chain NADH dehydrogenase (Complex I) that is believed to belong to the minimal assembly required for catalysis. Complex I functions in the transfer of electrons from NADH to the respiratory chain. The immediate electron acceptor for the enzyme is believed to be ubiquinone. This Varanus timorensis (Timor monitor) protein is NADH-ubiquinone oxidoreductase chain 2 (MT-ND2).